Here is a 615-residue protein sequence, read N- to C-terminus: uncharacterized protein (615 aa).

Ser48 bears the Phosphoserine mark. Residues 424-433 (DRENELEEGS) show a composition bias toward acidic residues. Residues 424 to 615 (DRENELEEGS…YARKKTKKNV (192 aa)) form a disordered region. 4 stretches are compositionally biased toward basic and acidic residues: residues 439–476 (DNER…KEVG), 484–496 (DGNK…KEVA), 504–521 (ESEK…KEVA), and 529–561 (ESEK…EPSK). Basic residues-rich tracts occupy residues 579 to 589 (KKPKVVKKVAK) and 606 to 615 (YARKKTKKNV).

This is an uncharacterized protein from Arabidopsis thaliana (Mouse-ear cress).